The sequence spans 378 residues: Galanin receptor 2b (378 aa).

The Extracellular segment spans residues 1 to 30 (MSDHEDLNKAMGHWNASESYQLNPASVIVS). Residues 31-51 (VVFSLIFLLGTIGNSLVLAVL) form a helical membrane-spanning segment. Residues 52–62 (LRSGQVGYNTT) lie on the Cytoplasmic side of the membrane. Residues 63-83 (NLFILNLSVADFFFIIFCVPF) form a helical membrane-spanning segment. Residues 84 to 101 (QATIYSLEGWVFGSFMCK) are Extracellular-facing. An intrachain disulfide couples Cys-100 to Cys-177. A helical membrane pass occupies residues 102–123 (VVHFFINLTMYASSFTLAAVSV). Residues 124 to 143 (DRYLAIRYPLRSRELRTPCN) are Cytoplasmic-facing. A helical membrane pass occupies residues 144 to 164 (AVVAMVVIWGLSLVFAGPYLS). Over 165–187 (YYDLIDFENSNVCVPGWEEHNRK) the chain is Extracellular. A helical transmembrane segment spans residues 188 to 208 (VLDTCTFVFGYVIPVLIVSLS). Residues 209-238 (YTRTIKYLWTAVDPLDGMSESKRAKRKVTK) lie on the Cytoplasmic side of the membrane. The chain crosses the membrane as a helical span at residues 239 to 259 (MIIIVTVLFCICWLPYHVVIL). The Extracellular segment spans residues 260-276 (CYLYGDFPFNQTTYAFR). The helical transmembrane segment at 277-297 (LLSHCMAYANSCLNPIVYALV) threads the bilayer. Residues 298–378 (SKHFRKGFKK…TITLPFQNQP (81 aa)) lie on the Cytoplasmic side of the membrane. Positions 339–362 (EVSQMNEENARQNESEMVNRPLAQ) are disordered.

The protein belongs to the G-protein coupled receptor 1 family. Expressed in neurons in the ventral area of the interpeduncular nucleus (IPN) where expression often overlaps with spx1.

The protein localises to the membrane. In terms of biological role, receptor for the hormone galanin. Receptor for the hormones spexin-1 and spexin-2. In Danio rerio (Zebrafish), this protein is Galanin receptor 2b.